The chain runs to 212 residues: Pyridoxine/pyridoxamine 5'-phosphate oxidase (212 aa).

FMN is bound by residues 59–64 (RMVLMK), 74–75 (YS), Lys81, and Gln103. Lys64 contributes to the substrate binding site. Substrate is bound by residues Tyr121 and Arg125. FMN contacts are provided by residues 138-139 (QS) and Trp183. Residue 189-191 (RLH) coordinates substrate. Arg193 provides a ligand contact to FMN.

This sequence belongs to the pyridoxamine 5'-phosphate oxidase family. As to quaternary structure, homodimer. FMN is required as a cofactor.

The enzyme catalyses pyridoxamine 5'-phosphate + O2 + H2O = pyridoxal 5'-phosphate + H2O2 + NH4(+). It carries out the reaction pyridoxine 5'-phosphate + O2 = pyridoxal 5'-phosphate + H2O2. It participates in cofactor metabolism; pyridoxal 5'-phosphate salvage; pyridoxal 5'-phosphate from pyridoxamine 5'-phosphate: step 1/1. The protein operates within cofactor metabolism; pyridoxal 5'-phosphate salvage; pyridoxal 5'-phosphate from pyridoxine 5'-phosphate: step 1/1. Functionally, catalyzes the oxidation of either pyridoxine 5'-phosphate (PNP) or pyridoxamine 5'-phosphate (PMP) into pyridoxal 5'-phosphate (PLP). The polypeptide is Pyridoxine/pyridoxamine 5'-phosphate oxidase (Rhodopseudomonas palustris (strain TIE-1)).